The following is a 109-amino-acid chain: Ribonuclease P protein component 4 (109 aa).

Positions 65, 68, 94, and 97 each coordinate Zn(2+).

This sequence belongs to the eukaryotic/archaeal RNase P protein component 4 family. As to quaternary structure, consists of a catalytic RNA component and at least 4-5 protein subunits. Zn(2+) serves as cofactor.

Its subcellular location is the cytoplasm. The catalysed reaction is Endonucleolytic cleavage of RNA, removing 5'-extranucleotides from tRNA precursor.. Functionally, part of ribonuclease P, a protein complex that generates mature tRNA molecules by cleaving their 5'-ends. This is Ribonuclease P protein component 4 from Methanococcus vannielii (strain ATCC 35089 / DSM 1224 / JCM 13029 / OCM 148 / SB).